The chain runs to 594 residues: Probable acyl-CoA dehydrogenase (594 aa).

Glutamate 405 functions as the Proton acceptor in the catalytic mechanism.

Belongs to the acyl-CoA dehydrogenase family. FAD is required as a cofactor.

It catalyses the reaction a 2,3-saturated acyl-CoA + A = a 2,3-dehydroacyl-CoA + AH2. It functions in the pathway lipid metabolism; fatty acid beta-oxidation. Functionally, involved in the degradation of long-chain fatty acids. This Bacillus subtilis (strain 168) protein is Probable acyl-CoA dehydrogenase (fadE).